The sequence spans 1284 residues: Zinc finger protein 423 (1284 aa).

2 disordered regions span residues 1 to 64 (MHKK…MEDE) and 87 to 117 (AHRCPGDGDDDPQLSWVASSPSSKDVASPTQ). Residues 34–46 (CDQKTSRALEDRN) are compositionally biased toward basic and acidic residues. Phosphoserine is present on residues Ser-47 and Ser-50. Residues 54 to 64 (RNEDDEDMEDE) show a composition bias toward acidic residues. The segment at 67-93 (YTCDHCQQDFESLADLTDHRAHRCPGD) adopts a C2H2-type 1; degenerate zinc-finger fold. Over residues 102 to 117 (WVASSPSSKDVASPTQ) the composition is skewed to polar residues. 7 C2H2-type zinc fingers span residues 138–160 (YPCQFCDKSFIRLSYLKRHEQIH), 166–188 (FKCTYCSRLFKHKRSRDRHIKLH), 194–216 (YHCHECEAAFSRSDHLKIHLKTH), 222–244 (FKCTVCKRGFSSTSSLQSHMQAH), 263–286 (FMCDYCEDTFSQTEELEKHVLTRH), 295–318 (LQCIHCPEVFVDENTLLAHIHQAH), and 323–345 (HKCPMCPEQFSSVEGVYCHLDSH). The segment at 346-398 (RQPDSSNHSVSPDPVLGSVASMSSATPDSSASVERGSTPDSTLKPLRGQKKMR) is disordered. Low complexity predominate over residues 363-377 (SVASMSSATPDSSAS). The segment at 409–433 (YSCPYCSKRDFNSLAVLEIHLKTIH) adopts a C2H2-type 9; degenerate zinc-finger fold. C2H2-type zinc fingers lie at residues 441–464 (HTCQICLDSMPTLYNLNEHVRKLH), 480–503 (FHCNYCPEMFADINSLQEHIRVSH), and 517–540 (FFCNQCSMGFLTESSLTEHIQQAH). The segment at 563–588 (YSCPYCTNSPIFGSILKLTKHIKENH) adopts a C2H2-type 13; atypical zinc-finger fold. The disordered stretch occupies residues 590–624 (NIPLAHSKKSKAEQSPVSSDVEVSSPKRQRLSASA). Residue Ser-604 is modified to Phosphoserine. Over residues 604-615 (SPVSSDVEVSSP) the composition is skewed to low complexity. 7 C2H2-type zinc fingers span residues 632-654 (YPCNQCDLKFSNFESFQTHLKLH), 662-684 (QACPQCKEDFDSQESLLQHLTVH), 692-715 (YVCESCDKQFSSVDDLQKHLLDMH), 720-743 (YHCTLCQEVFDSKVSIQVHLAVKH), 750-773 (YRCTACNWDFRKEADLQVHVKHSH), 781-803 (HKCIFCGETFSTEVELQCHITTH), and 807-830 (YNCKFCSKAFHAIILLEKHLREKH). The segment at 886 to 908 (YGCDICGAAYTMEVLLQNHRLRD) adopts a C2H2-type 21; degenerate zinc-finger fold. C2H2-type zinc fingers lie at residues 930–952 (HKCNVCSRTFFSENGLREHLQTH), 959–981 (YMCPICGERFPSLLTLTEHKVTH), and 1020–1042 (FRCVVCMQTVTSTLELKIHGTFH). Ser-1054 is modified (phosphoserine). The C2H2-type 25; degenerate zinc finger occupies 1064–1082 (YKCALCLKEFRSKQDLVKL). 5 consecutive C2H2-type zinc fingers follow at residues 1120-1143 (LRCPECSVKFESAEDLESHMQVDH), 1168-1190 (YQCIKCQMTFENEREIQIHVANH), 1198-1220 (HECKLCNQMFDSPAKLLCHLIEH), 1229-1252 (FKCPVCFTVFVQANKLQQHIFAVH), and 1259-1282 (YDCSQCPQKFFFQTELQNHTMSQH). The span at 1136 to 1147 (ESHMQVDHRDLT) shows a compositional bias: basic and acidic residues. Positions 1136 to 1163 (ESHMQVDHRDLTPETSGPRKGTQTSPVP) are disordered.

It belongs to the krueppel C2H2-type zinc-finger protein family. In terms of assembly, homodimer. Interacts with EBF1. Interacts with SMAD1 and SMAD4. Interacts with PARP1. Interacts with CEP290. Expressed in brain, lung, skeletal muscle, heart, pancreas and kidney but not liver or placenta. Also expressed in aorta, ovary, pituitary, small intestine, fetal brain, fetal kidney and, within the adult brain, in the substantia nigra, medulla, amygdala, thalamus and cerebellum.

The protein localises to the nucleus. Transcription factor that can both act as an activator or a repressor depending on the context. Plays a central role in BMP signaling and olfactory neurogenesis. Associates with SMADs in response to BMP2 leading to activate transcription of BMP target genes. Acts as a transcriptional repressor via its interaction with EBF1, a transcription factor involved in terminal olfactory receptor neurons differentiation; this interaction preventing EBF1 to bind DNA and activate olfactory-specific genes. Involved in olfactory neurogenesis by participating in a developmental switch that regulates the transition from differentiation to maturation in olfactory receptor neurons. Controls proliferation and differentiation of neural precursors in cerebellar vermis formation. This is Zinc finger protein 423 (ZNF423) from Homo sapiens (Human).